A 123-amino-acid chain; its full sequence is Small ribosomal subunit protein uS12 (123 aa).

Aspartate 89 carries the post-translational modification 3-methylthioaspartic acid.

Belongs to the universal ribosomal protein uS12 family. As to quaternary structure, part of the 30S ribosomal subunit. Contacts proteins S8 and S17. May interact with IF1 in the 30S initiation complex.

Its function is as follows. With S4 and S5 plays an important role in translational accuracy. Functionally, interacts with and stabilizes bases of the 16S rRNA that are involved in tRNA selection in the A site and with the mRNA backbone. Located at the interface of the 30S and 50S subunits, it traverses the body of the 30S subunit contacting proteins on the other side and probably holding the rRNA structure together. The combined cluster of proteins S8, S12 and S17 appears to hold together the shoulder and platform of the 30S subunit. This chain is Small ribosomal subunit protein uS12, found in Pelagibacter ubique (strain HTCC1062).